Reading from the N-terminus, the 416-residue chain is D-amino acid dehydrogenase (416 aa).

3–17 serves as a coordination point for FAD; sequence VTILGAGVIGVTTAY.

The protein belongs to the DadA oxidoreductase family. It depends on FAD as a cofactor.

The catalysed reaction is a D-alpha-amino acid + A + H2O = a 2-oxocarboxylate + AH2 + NH4(+). It functions in the pathway amino-acid degradation; D-alanine degradation; NH(3) and pyruvate from D-alanine: step 1/1. Oxidative deamination of D-amino acids. The chain is D-amino acid dehydrogenase from Rhizobium rhizogenes (strain K84 / ATCC BAA-868) (Agrobacterium radiobacter).